A 191-amino-acid polypeptide reads, in one-letter code: Protein GrpE (191 aa).

Over residues 1 to 10 (MNHEEQKVET) the composition is skewed to basic and acidic residues. The disordered stretch occupies residues 1–28 (MNHEEQKVETMEQVEAQPVEPTDVDSEV).

This sequence belongs to the GrpE family. Homodimer.

The protein localises to the cytoplasm. In terms of biological role, participates actively in the response to hyperosmotic and heat shock by preventing the aggregation of stress-denatured proteins, in association with DnaK and GrpE. It is the nucleotide exchange factor for DnaK and may function as a thermosensor. Unfolded proteins bind initially to DnaJ; upon interaction with the DnaJ-bound protein, DnaK hydrolyzes its bound ATP, resulting in the formation of a stable complex. GrpE releases ADP from DnaK; ATP binding to DnaK triggers the release of the substrate protein, thus completing the reaction cycle. Several rounds of ATP-dependent interactions between DnaJ, DnaK and GrpE are required for fully efficient folding. This Aeromonas salmonicida (strain A449) protein is Protein GrpE.